The primary structure comprises 633 residues: FAD-binding monooxygenase andJ (633 aa).

Residues 117–120 (TWYW), 129–130 (DT), and Tyr-135 contribute to the FAD site. 127 to 129 (MCD) lines the NADP(+) pocket. NADP(+)-binding positions include 269–275 (TGASAVQ) and 292–293 (RT).

The protein belongs to the FAD-binding monooxygenase family. The cofactor is FAD.

It participates in secondary metabolite biosynthesis; terpenoid biosynthesis. In terms of biological role, FAD-binding monooxygenase; part of the gene cluster that mediates the biosynthesis of anditomin, a fungal meroterpenoid. The first step of the pathway is the synthesis of 3,5-dimethylorsellinic acid (DMOA) by the polyketide synthase andM. DMOA is then converted to the phthalide compound 5,7-dihydroxy-4,6-dimethylphthalide (DHDMP) by the cytochrome P450 monooxygenase andK, which is further prenylated by the prenyltransferase andD to yield farnesyl-DHDMP. Further epoxidation by the FAD-dependent monooxygenase andE leads to epoxyfarnesyl-DHDMP. The next step involves the terpene cyclase andB that converts epoxyfarnesyl-DHDMP into preandiloid A through opening of the epoxide ring followed by the cyclization of the farnesyl moiety. Preandiloid A is in turn oxidized at the C-3 hydroxyl group to yield preandiloid B by the dehydrogenase andC. The dioxygenase andA is solely responsible for the dehydrogenation of preandiloid B leading to the enone preandiloid C, as well as for the intriguing structural rearrangement to generate the bicyclo[2.2.2]octane core, transforming preandiloid C into andiconin. FAD-binding monooxygenase andJ then produces andilesin D which is reduced by dehydrogenase andI to yield andilesin A. Action of acetyltransferase andG followed by a spontaneous acetate elimination leads then to andilesin B, which is in turn substrate of the short chain dehydrogenase andH to yield andilesin C. Finally, the dioxygenase andF catalyzes the transformation of andilesin C to anditomin. The protein is FAD-binding monooxygenase andJ of Emericella variicolor (Aspergillus stellatus).